A 275-amino-acid polypeptide reads, in one-letter code: Ribosomal RNA small subunit methyltransferase A (275 aa).

S-adenosyl-L-methionine is bound by residues asparagine 21, leucine 23, glycine 48, glutamate 69, aspartate 94, and asparagine 115.

This sequence belongs to the class I-like SAM-binding methyltransferase superfamily. rRNA adenine N(6)-methyltransferase family. RsmA subfamily.

It is found in the cytoplasm. It carries out the reaction adenosine(1518)/adenosine(1519) in 16S rRNA + 4 S-adenosyl-L-methionine = N(6)-dimethyladenosine(1518)/N(6)-dimethyladenosine(1519) in 16S rRNA + 4 S-adenosyl-L-homocysteine + 4 H(+). In terms of biological role, specifically dimethylates two adjacent adenosines (A1518 and A1519) in the loop of a conserved hairpin near the 3'-end of 16S rRNA in the 30S particle. May play a critical role in biogenesis of 30S subunits. This is Ribosomal RNA small subunit methyltransferase A from Clostridium botulinum (strain Langeland / NCTC 10281 / Type F).